Consider the following 107-residue polypeptide: Colipase (107 aa).

The signal sequence occupies residues 1 to 17 (MEKVLVLLLVALSVAYA). The propeptide at 18–22 (APGPR) is enterostatin, activation peptide. Disulfide bonds link C34-C45, C40-C56, C44-C78, C66-C86, and C80-C104.

Belongs to the colipase family. As to quaternary structure, forms a 1:1 stoichiometric complex with pancreatic lipase. Expressed by the pancreas.

The protein localises to the secreted. Its function is as follows. Colipase is a cofactor of pancreatic lipase. It allows the lipase to anchor itself to the lipid-water interface. Without colipase the enzyme is washed off by bile salts, which have an inhibitory effect on the lipase. In terms of biological role, enterostatin has a biological activity as a satiety signal. This Oryctolagus cuniculus (Rabbit) protein is Colipase (CLPS).